We begin with the raw amino-acid sequence, 347 residues long: Biotin synthase (347 aa).

In terms of domain architecture, Radical SAM core spans Ala40–Arg258. [4Fe-4S] cluster-binding residues include Cys55, Cys59, and Cys62. Cys99, Cys130, Cys190, and Arg262 together coordinate [2Fe-2S] cluster.

This sequence belongs to the radical SAM superfamily. Biotin synthase family. As to quaternary structure, homodimer. It depends on [4Fe-4S] cluster as a cofactor. The cofactor is [2Fe-2S] cluster.

The enzyme catalyses (4R,5S)-dethiobiotin + (sulfur carrier)-SH + 2 reduced [2Fe-2S]-[ferredoxin] + 2 S-adenosyl-L-methionine = (sulfur carrier)-H + biotin + 2 5'-deoxyadenosine + 2 L-methionine + 2 oxidized [2Fe-2S]-[ferredoxin]. It functions in the pathway cofactor biosynthesis; biotin biosynthesis; biotin from 7,8-diaminononanoate: step 2/2. Functionally, catalyzes the conversion of dethiobiotin (DTB) to biotin by the insertion of a sulfur atom into dethiobiotin via a radical-based mechanism. This is Biotin synthase from Stenotrophomonas maltophilia (strain K279a).